We begin with the raw amino-acid sequence, 820 residues long: Trimethylamine-N-oxide reductase (820 aa).

The tat-type signal signal peptide spans 1 to 33 (MAITRRSFLKGVATTSAASVIGPSLLASASANA). Ser-179 lines the Mo-bis(molybdopterin guanine dinucleotide) pocket.

It belongs to the prokaryotic molybdopterin-containing oxidoreductase family. Requires Mo-bis(molybdopterin guanine dinucleotide) as cofactor. Post-translationally, predicted to be exported by the Tat system. The position of the signal peptide cleavage has not been experimentally proven.

The protein resides in the periplasm. The catalysed reaction is trimethylamine + 2 Fe(III)-[cytochrome c] + H2O = trimethylamine N-oxide + 2 Fe(II)-[cytochrome c] + 3 H(+). Its function is as follows. Reduces trimethylamine-N-oxide (TMAO) into trimethylamine; an anaerobic reaction coupled to energy-yielding reactions. This Vibrio vulnificus (strain YJ016) protein is Trimethylamine-N-oxide reductase (torA).